The primary structure comprises 304 residues: CRISPR-associated endonuclease Cas1 (304 aa).

Residues Glu-148, His-204, and Glu-219 each coordinate Mn(2+).

It belongs to the CRISPR-associated endonuclease Cas1 family. Homodimer, forms a heterotetramer with a Cas2 homodimer. Requires Mg(2+) as cofactor. It depends on Mn(2+) as a cofactor.

In terms of biological role, CRISPR (clustered regularly interspaced short palindromic repeat), is an adaptive immune system that provides protection against mobile genetic elements (viruses, transposable elements and conjugative plasmids). CRISPR clusters contain spacers, sequences complementary to antecedent mobile elements, and target invading nucleic acids. CRISPR clusters are transcribed and processed into CRISPR RNA (crRNA). Acts as a dsDNA endonuclease. Involved in the integration of spacer DNA into the CRISPR cassette. The chain is CRISPR-associated endonuclease Cas1 from Neisseria meningitidis serogroup C (strain 8013).